A 750-amino-acid polypeptide reads, in one-letter code: Probable methylmalonyl-CoA mutase large subunit (750 aa).

Positions 91, 94, 101, 103, 105, and 130 each coordinate (R)-methylmalonyl-CoA. Phe-133 and Ala-155 together coordinate cob(II)alamin. (R)-methylmalonyl-CoA contacts are provided by Thr-211 and Gln-213. Val-222 and Arg-223 together coordinate cob(II)alamin. (R)-methylmalonyl-CoA is bound by residues Arg-223, His-260, Arg-299, and Ser-301. Positions 349, 386, 389, 628, 629, 630, 631, 674, 676, 705, and 728 each coordinate cob(II)alamin. The region spanning 616-748 (RPRILIAKMG…HRLAERLGYT (133 aa)) is the B12-binding domain.

Belongs to the methylmalonyl-CoA mutase family. Heterodimer of an alpha and a beta chain. It depends on adenosylcob(III)alamin as a cofactor.

It carries out the reaction (R)-methylmalonyl-CoA = succinyl-CoA. It functions in the pathway metabolic intermediate metabolism; propanoyl-CoA degradation; succinyl-CoA from propanoyl-CoA: step 3/3. In terms of biological role, catalyzes the isomerization of succinyl-CoA to methylmalonyl-CoA during synthesis of propionate from tricarboxylic acid-cycle intermediates. The sequence is that of Probable methylmalonyl-CoA mutase large subunit (mutB) from Mycobacterium bovis (strain ATCC BAA-935 / AF2122/97).